The following is a 188-amino-acid chain: dCTP deaminase (188 aa).

DCTP is bound by residues 111–116 (KSTYAR), 135–137 (TLE), Q156, Y170, and Q180. The active-site Proton donor/acceptor is the E137.

Belongs to the dCTP deaminase family. As to quaternary structure, homotrimer.

It catalyses the reaction dCTP + H2O + H(+) = dUTP + NH4(+). It participates in pyrimidine metabolism; dUMP biosynthesis; dUMP from dCTP (dUTP route): step 1/2. Catalyzes the deamination of dCTP to dUTP. This chain is dCTP deaminase, found in Acidithiobacillus ferrooxidans (strain ATCC 23270 / DSM 14882 / CIP 104768 / NCIMB 8455) (Ferrobacillus ferrooxidans (strain ATCC 23270)).